The sequence spans 238 residues: Aspartate/glutamate leucyltransferase (238 aa).

Belongs to the R-transferase family. Bpt subfamily.

It localises to the cytoplasm. The catalysed reaction is N-terminal L-glutamyl-[protein] + L-leucyl-tRNA(Leu) = N-terminal L-leucyl-L-glutamyl-[protein] + tRNA(Leu) + H(+). It catalyses the reaction N-terminal L-aspartyl-[protein] + L-leucyl-tRNA(Leu) = N-terminal L-leucyl-L-aspartyl-[protein] + tRNA(Leu) + H(+). Functions in the N-end rule pathway of protein degradation where it conjugates Leu from its aminoacyl-tRNA to the N-termini of proteins containing an N-terminal aspartate or glutamate. This Aeromonas hydrophila subsp. hydrophila (strain ATCC 7966 / DSM 30187 / BCRC 13018 / CCUG 14551 / JCM 1027 / KCTC 2358 / NCIMB 9240 / NCTC 8049) protein is Aspartate/glutamate leucyltransferase.